The primary structure comprises 340 residues: HTH-type transcriptional regulator CelR (340 aa).

One can recognise an HTH lacI-type domain in the interval 1–61 (MERRRRPTLE…PNRAARTLVT (61 aa)). Residues 9 to 28 (LEMVAALAGVGRGTVSRVIN) constitute a DNA-binding region (H-T-H motif).

The protein localises to the cytoplasm. Activity is controlled by cytoplasmic cellobiose levels. Binding of CelR to the celE promoter is inhibited specifically by low concentrations of cellobiose, the major end product of cellulases. Activity may also be regulated through post-translational modification. In terms of biological role, transcriptional regulator that regulates the expression of all six cellulases, encoded by the cel genes (designated celA through celF). Acts as a repressor. Specifically binds to a 14-bp inverted repeat site, which is present in the upstream region of the cellulase genes. The polypeptide is HTH-type transcriptional regulator CelR (Thermobifida fusca (Thermomonospora fusca)).